A 510-amino-acid chain; its full sequence is ATP synthase subunit alpha (510 aa).

G171 to T178 lines the ATP pocket.

It belongs to the ATPase alpha/beta chains family. In terms of assembly, F-type ATPases have 2 components, CF(1) - the catalytic core - and CF(0) - the membrane proton channel. CF(1) has five subunits: alpha(3), beta(3), gamma(1), delta(1), epsilon(1). CF(0) has three main subunits: a(1), b(2) and c(9-12). The alpha and beta chains form an alternating ring which encloses part of the gamma chain. CF(1) is attached to CF(0) by a central stalk formed by the gamma and epsilon chains, while a peripheral stalk is formed by the delta and b chains.

It is found in the cell inner membrane. It carries out the reaction ATP + H2O + 4 H(+)(in) = ADP + phosphate + 5 H(+)(out). Its function is as follows. Produces ATP from ADP in the presence of a proton gradient across the membrane. The alpha chain is a regulatory subunit. This chain is ATP synthase subunit alpha, found in Phenylobacterium zucineum (strain HLK1).